We begin with the raw amino-acid sequence, 512 residues long: Phosphoenolpyruvate carboxylase (512 aa).

The protein belongs to the PEPCase type 2 family. As to quaternary structure, homotetramer. Requires Mg(2+) as cofactor.

It catalyses the reaction oxaloacetate + phosphate = phosphoenolpyruvate + hydrogencarbonate. Its function is as follows. Catalyzes the irreversible beta-carboxylation of phosphoenolpyruvate (PEP) to form oxaloacetate (OAA), a four-carbon dicarboxylic acid source for the tricarboxylic acid cycle. This chain is Phosphoenolpyruvate carboxylase, found in Caldivirga maquilingensis (strain ATCC 700844 / DSM 13496 / JCM 10307 / IC-167).